Here is a 261-residue protein sequence, read N- to C-terminus: uncharacterized protein (261 aa).

The next 5 membrane-spanning stretches (helical) occupy residues 38-58, 134-154, 163-183, 195-215, and 219-239; these read FIYL…ITLL, YTLM…LALI, ILIN…TYVL, YMGL…LFFL, and HKSV…CLKV.

It is found in the membrane. This is an uncharacterized protein from Dictyostelium discoideum (Social amoeba).